A 511-amino-acid chain; its full sequence is ATP synthase subunit beta, mitochondrial (511 aa).

A mitochondrion-targeting transit peptide spans 1 to 33; that stretch reads MVLPRLYTATSRAAFKAAKQSAPLLSTSWKRCM. Thr112 is subject to Phosphothreonine. Residue 190–197 coordinates ATP; the sequence is GGAGVGKT. Phosphothreonine is present on Thr237. Ser373 bears the Phosphoserine mark.

It belongs to the ATPase alpha/beta chains family. In terms of assembly, F-type ATPases have 2 components, CF(1) - the catalytic core - and CF(0) - the membrane proton channel. CF(1) has five subunits: alpha(3), beta(3), gamma(1), delta(1), epsilon(1). CF(0) has three main subunits: a, b and c.

The protein localises to the mitochondrion. It localises to the mitochondrion inner membrane. It catalyses the reaction ATP + H2O + 4 H(+)(in) = ADP + phosphate + 5 H(+)(out). Mitochondrial membrane ATP synthase (F(1)F(0) ATP synthase or Complex V) produces ATP from ADP in the presence of a proton gradient across the membrane which is generated by electron transport complexes of the respiratory chain. F-type ATPases consist of two structural domains, F(1) - containing the extramembraneous catalytic core, and F(0) - containing the membrane proton channel, linked together by a central stalk and a peripheral stalk. During catalysis, ATP synthesis in the catalytic domain of F(1) is coupled via a rotary mechanism of the central stalk subunits to proton translocation. Subunits alpha and beta form the catalytic core in F(1). Rotation of the central stalk against the surrounding alpha(3)beta(3) subunits leads to hydrolysis of ATP in three separate catalytic sites on the beta subunits. The protein is ATP synthase subunit beta, mitochondrial (ATP2) of Saccharomyces cerevisiae (strain ATCC 204508 / S288c) (Baker's yeast).